The sequence spans 353 residues: Fe(3+) ions import ATP-binding protein FbpC (353 aa).

The ABC transporter domain occupies 9–239; that stretch reads VVFENVRKTF…PASSFIADFM (231 aa). 41–48 is a binding site for ATP; that stretch reads GPSGCGKT.

Belongs to the ABC transporter superfamily. Fe(3+) ion importer (TC 3.A.1.10) family. As to quaternary structure, the complex is composed of two ATP-binding proteins (FbpC), two transmembrane proteins (FbpB) and a solute-binding protein (FbpA).

It localises to the cell inner membrane. The catalysed reaction is Fe(3+)(out) + ATP + H2O = Fe(3+)(in) + ADP + phosphate + H(+). Functionally, part of the ABC transporter complex FbpABC involved in Fe(3+) ions import. Responsible for energy coupling to the transport system. In Agrobacterium fabrum (strain C58 / ATCC 33970) (Agrobacterium tumefaciens (strain C58)), this protein is Fe(3+) ions import ATP-binding protein FbpC.